Consider the following 791-residue polypeptide: Protein SEY1 (791 aa).

The Cytoplasmic segment spans residues 1 to 685 (MSEDGASKCQ…KRSTIKSHTH (685 aa)). Residues 40–268 (GLDYHVISVF…REDYYLSGKY (229 aa)) form the GB1/RHD3-type G domain. 50–57 (GSQSSGKS) contacts GTP. A helical transmembrane segment spans residues 686 to 706 (IPMWIYAIIAVLGWNEFMLVL). Residues 707-709 (RNP) are Lumenal-facing. Residues 710-730 (LFIALMLLIVGAAYTVHRLNL) traverse the membrane as a helical segment. Topologically, residues 731–791 (WTPLATFASA…NETKENANES (61 aa)) are cytoplasmic. The interval 763 to 791 (PKNASSKPVESFEMQDLSVNETKENANES) is disordered.

This sequence belongs to the TRAFAC class dynamin-like GTPase superfamily. GB1/RHD3 GTPase family. RHD3 subfamily.

The protein localises to the endoplasmic reticulum membrane. Its function is as follows. Cooperates with the reticulon proteins and tubule-shaping DP1 family proteins to generate and maintain the structure of the tubular endoplasmic reticulum network. Has GTPase activity, which is required for its function in ER organization. The sequence is that of Protein SEY1 from Eremothecium gossypii (strain ATCC 10895 / CBS 109.51 / FGSC 9923 / NRRL Y-1056) (Yeast).